Here is a 51-residue protein sequence, read N- to C-terminus: Large ribosomal subunit protein eL39 (51 aa).

A compositionally biased stretch (basic residues) spans 1-19; sequence MSHNMKGQKKRLAKAHKQN. The disordered stretch occupies residues 1 to 23; the sequence is MSHNMKGQKKRLAKAHKQNSRVP.

It belongs to the eukaryotic ribosomal protein eL39 family.

The polypeptide is Large ribosomal subunit protein eL39 (Methanosarcina mazei (strain ATCC BAA-159 / DSM 3647 / Goe1 / Go1 / JCM 11833 / OCM 88) (Methanosarcina frisia)).